The primary structure comprises 513 residues: MEISVASVTVSVVIAVVTWWVWRTLKWVWFQPKMLESYLRRQGLSGTPYTPLVGDLKRNSKMLTEAISKPIRLNDDITQRVVPYPLQMLKTYGRTHFTWLGPIPAITIMDPELIKEVFNRVYDFQKARLFPLARLIATGLVRYDGDKWAKHRKIINPAFHLEKLKNMVPAFHQCCSEVVGAWDKLVSDKRSSCEVDVWPGLVSMTADMISRTAFGSSYKEGQRIFELQEEIKELLIQSLGKAFIPGYHYLPTKGNRRMKAADREIKVILRGIVNKRLRAREAGEAPSEDLLGILLESNLGQAKGNGMSIEDVMEECKLFYLAGQETTSVLLVWTMVMLSQHQDWQARAREEVKQVFGDKEPNTEGLNQLKVMTMILYEVLRLYPPVTQLPRAIHKEMKLGDMTLPAGVHINLPIMLVQRDTELWGNDAAEFKPERFKDGLSKAAKNQVSFFSFAWGPRICIGQNFALMEAKMAMALILQRFSLELSPSYVHAPYSVITLHPQFGAHLILHKLY.

The chain crosses the membrane as a helical span at residues 2 to 22; the sequence is EISVASVTVSVVIAVVTWWVW. C460 lines the heme pocket.

This sequence belongs to the cytochrome P450 family. Heme is required as a cofactor.

The protein localises to the membrane. The catalysed reaction is oleanolate + reduced [NADPH--hemoprotein reductase] + O2 = hederagenin + oxidized [NADPH--hemoprotein reductase] + H2O + H(+). Its function is as follows. Catalyzes the oxidation of oleanolate at the C-23 position to form hederagenin. This chain is Cytochrome P450 72A552, found in Barbarea vulgaris (Yellow rocket).